The chain runs to 386 residues: Protein phosphatase methylesterase 1 (386 aa).

A disordered region spans residues 1–38 (MSALEKSMHLGRLPSRPPLPGSGGSQSGAKMRMGPGRK). S15 bears the Phosphoserine mark. R16 is modified (asymmetric dimethylarginine; alternate). Position 16 is an omega-N-methylarginine; alternate (R16). Residue S42 is modified to Phosphoserine. Residues S156 and D181 contribute to the active site. A compositionally biased stretch (acidic residues) spans 254–265 (IIEEEEEDEEGS). Positions 254-280 (IIEEEEEDEEGSESISKRKKEDDMETK) are disordered. Residues 268-280 (ISKRKKEDDMETK) are compositionally biased toward basic and acidic residues. The active site involves H349.

It belongs to the AB hydrolase superfamily. As to quaternary structure, binds PPP2CA and PPP2CB. Phosphorylated by SIK1 following increases in intracellular sodium, leading to dissociation from the protein phosphatase 2A (PP2A) complex and subsequent dephosphorylation of sodium/potassium-transporting ATPase ATP1A1.

The catalysed reaction is [phosphatase 2A protein]-C-terminal L-leucine methyl ester + H2O = [phosphatase 2A protein]-C-terminal L-leucine + methanol + H(+). Functionally, demethylates proteins that have been reversibly carboxymethylated. Demethylates PPP2CB (in vitro) and PPP2CA. Binding to PPP2CA displaces the manganese ion and inactivates the enzyme. In Homo sapiens (Human), this protein is Protein phosphatase methylesterase 1 (PPME1).